The following is a 109-amino-acid chain: Nucleoid-associated protein VV1_2004 (109 aa).

It belongs to the YbaB/EbfC family. Homodimer.

Its subcellular location is the cytoplasm. It localises to the nucleoid. In terms of biological role, binds to DNA and alters its conformation. May be involved in regulation of gene expression, nucleoid organization and DNA protection. This Vibrio vulnificus (strain CMCP6) protein is Nucleoid-associated protein VV1_2004.